We begin with the raw amino-acid sequence, 425 residues long: Putative E3 ubiquitin-protein ligase UBR7 (425 aa).

The UBR-type zinc finger occupies 44–116; that stretch reads EKCSYSQGSV…KNLECKLLPD (73 aa). The PHD-type; atypical zinc finger occupies 132-188; the sequence is GLYCICKRPYPDPEDEIPDEMIQCVVCEDWFHGRHLGAIPPESGDFQEMVCQACMKR. Glycyl lysine isopeptide (Lys-Gly) (interchain with G-Cter in SUMO2) cross-links involve residues Lys-225 and Lys-252. The disordered stretch occupies residues 225–246; the sequence is KPENGEHQDSTLKEDVPEQGKD. Phosphoserine is present on Ser-264. Lys-274 participates in a covalent cross-link: Glycyl lysine isopeptide (Lys-Gly) (interchain with G-Cter in SUMO2). Ser-354 carries the phosphoserine modification. Lys-398 participates in a covalent cross-link: Glycyl lysine isopeptide (Lys-Gly) (interchain with G-Cter in SUMO2).

In terms of tissue distribution, expressed in sperm (at protein level).

It carries out the reaction S-ubiquitinyl-[E2 ubiquitin-conjugating enzyme]-L-cysteine + [acceptor protein]-L-lysine = [E2 ubiquitin-conjugating enzyme]-L-cysteine + N(6)-ubiquitinyl-[acceptor protein]-L-lysine.. The protein operates within protein modification; protein ubiquitination. In terms of biological role, E3 ubiquitin-protein ligase which is a component of the N-end rule pathway. Recognizes and binds to proteins bearing specific N-terminal residues that are destabilizing according to the N-end rule, leading to their ubiquitination and subsequent degradation. The sequence is that of Putative E3 ubiquitin-protein ligase UBR7 (UBR7) from Homo sapiens (Human).